A 206-amino-acid chain; its full sequence is Small ribosomal subunit protein uS5 (206 aa).

Residues 1–15 (MTDTPTKQEIQSKND) show a composition bias toward polar residues. The segment at 1-50 (MTDTPTKQEIQSKNDNVPAATPVEQKKNNRNDRKRNRRGDSKNLERDSDW) is disordered. Positions 38 to 50 (RGDSKNLERDSDW) are enriched in basic and acidic residues. The 64-residue stretch at 50–113 (WQERVVQIRR…SDGKKNLVRV (64 aa)) folds into the S5 DRBM domain.

The protein belongs to the universal ribosomal protein uS5 family. As to quaternary structure, part of the 30S ribosomal subunit. Contacts proteins S4 and S8.

Functionally, with S4 and S12 plays an important role in translational accuracy. Its function is as follows. Located at the back of the 30S subunit body where it stabilizes the conformation of the head with respect to the body. The polypeptide is Small ribosomal subunit protein uS5 (Prochlorococcus marinus (strain AS9601)).